Reading from the N-terminus, the 124-residue chain is MTIDEMMSAIKGMTVIELSELVKALEKEFGVSAAVAVAAPAAGGAAVAAAAEEEKTEFNVILKDVGANKINVIKAVRELTSLGLKEAKDMVEAAPKAVKENVSKEEADAAKKALEAAGATIEIK.

This sequence belongs to the bacterial ribosomal protein bL12 family. Homodimer. Part of the ribosomal stalk of the 50S ribosomal subunit. Forms a multimeric L10(L12)X complex, where L10 forms an elongated spine to which 2 to 4 L12 dimers bind in a sequential fashion. Binds GTP-bound translation factors.

Functionally, forms part of the ribosomal stalk which helps the ribosome interact with GTP-bound translation factors. Is thus essential for accurate translation. The protein is Large ribosomal subunit protein bL12 of Dehalococcoides mccartyi (strain ATCC BAA-2266 / KCTC 15142 / 195) (Dehalococcoides ethenogenes (strain 195)).